Consider the following 223-residue polypeptide: Deoxyribose-phosphate aldolase (223 aa).

Asp89 (proton donor/acceptor) is an active-site residue. The active-site Schiff-base intermediate with acetaldehyde is Lys152. Catalysis depends on Lys181, which acts as the Proton donor/acceptor.

This sequence belongs to the DeoC/FbaB aldolase family. DeoC type 1 subfamily.

The protein localises to the cytoplasm. The catalysed reaction is 2-deoxy-D-ribose 5-phosphate = D-glyceraldehyde 3-phosphate + acetaldehyde. Its pathway is carbohydrate degradation; 2-deoxy-D-ribose 1-phosphate degradation; D-glyceraldehyde 3-phosphate and acetaldehyde from 2-deoxy-alpha-D-ribose 1-phosphate: step 2/2. Functionally, catalyzes a reversible aldol reaction between acetaldehyde and D-glyceraldehyde 3-phosphate to generate 2-deoxy-D-ribose 5-phosphate. In Listeria monocytogenes serovar 1/2a (strain ATCC BAA-679 / EGD-e), this protein is Deoxyribose-phosphate aldolase.